The chain runs to 423 residues: AUGMIN subunit 4 (423 aa).

A coiled-coil region spans residues Ile-267–Lys-287.

This sequence belongs to the HAUS4 family. As to quaternary structure, part of the augmin complex composed of 8 subunits. The complex acts on microtubules and interacts with gamma-tubulin in spindles and the phragmoplast.

Its subcellular location is the cytoplasm. It localises to the cytoskeleton. It is found in the spindle. The protein localises to the phragmoplast. In terms of biological role, involved in microtubules reorganization during spindle and phragmoplast development. In Arabidopsis thaliana (Mouse-ear cress), this protein is AUGMIN subunit 4 (AUG4).